We begin with the raw amino-acid sequence, 569 residues long: Cytosolic purine 5'-nucleotidase (569 aa).

Catalysis depends on aspartate 52, which acts as the Nucleophile. Residues aspartate 52 and aspartate 54 each coordinate IMP. Positions 52 and 54 each coordinate Mg(2+). Catalysis depends on aspartate 54, which acts as the Proton donor. 2 residues coordinate ATP: arginine 144 and asparagine 154. Residues arginine 202, aspartate 206, lysine 215, threonine 249, asparagine 250, serine 251, and lysine 292 each coordinate IMP. Aspartate 351 provides a ligand contact to Mg(2+). Residues glutamine 453 and arginine 456 each contribute to the ATP site. The tract at residues 527–569 (SISEIKPPNLFPQAPQEITHCHDEDDDEEEEEEEVEEEEEEEE) is disordered. Residues 548-569 (HDEDDDEEEEEEEVEEEEEEEE) form a required for tetramer assembly region. Residues 550–569 (EDDDEEEEEEEVEEEEEEEE) are compositionally biased toward acidic residues.

It belongs to the 5'(3')-deoxyribonucleotidase family. Homotetramer. Requires Mg(2+) as cofactor.

The protein resides in the cytoplasm. It is found in the cytosol. It carries out the reaction a ribonucleoside 5'-phosphate + H2O = a ribonucleoside + phosphate. It catalyses the reaction a 2'-deoxyribonucleoside + a ribonucleoside 5'-phosphate = a ribonucleoside + a 2'-deoxyribonucleoside 5'-phosphate. The enzyme catalyses IMP + H2O = inosine + phosphate. The catalysed reaction is GMP + H2O = guanosine + phosphate. It carries out the reaction dGMP + H2O = 2'-deoxyguanosine + phosphate. It catalyses the reaction dIMP + H2O = 2'-deoxyinosine + phosphate. The enzyme catalyses XMP + H2O = xanthosine + phosphate. The catalysed reaction is inosine + GMP = guanosine + IMP. It carries out the reaction dGMP + inosine = 2'-deoxyguanosine + IMP. It catalyses the reaction dIMP + inosine = 2'-deoxyinosine + IMP. The enzyme catalyses inosine + UMP = uridine + IMP. The catalysed reaction is inosine + CMP = cytidine + IMP. It carries out the reaction inosine + AMP = IMP + adenosine. Allosterically activated by various compounds including ATP, 2,3-BPG/2,3-Bisphosphoglyceric acid and Ap4A/P1,P4-bis(5'-adenosyl) tetraphosphate. Binding of an allosteric activator is a prerequisiste to magnesium and substrate binding. Inhibited by inorganic phosphate. Inhibited by inosine, guanosine, p-chloromercuribenzoate and NaF. Functionally, broad specificity cytosolic 5'-nucleotidase that catalyzes the dephosphorylation of 6-hydroxypurine nucleoside 5'-monophosphates. In addition, possesses a phosphotransferase activity by which it can transfer a phosphate from a donor nucleoside monophosphate to an acceptor nucleoside, preferably inosine, deoxyinosine and guanosine. Has the highest activities for IMP and GMP followed by dIMP, dGMP and XMP. Could also catalyze the transfer of phosphates from pyrimidine monophosphates but with lower efficiency. Through these activities regulates the purine nucleoside/nucleotide pools within the cell. The sequence is that of Cytosolic purine 5'-nucleotidase (NT5C2) from Gallus gallus (Chicken).